Reading from the N-terminus, the 100-residue chain is Ubiquinol-cytochrome-C reductase complex subunit IX, mitochondrial (100 aa).

The N-terminal 30 residues, Met1–Phe30, are a transit peptide targeting the mitochondrion. A helical transmembrane segment spans residues Leu66–Ala86.

As to quaternary structure, plants bc1 complex contains 10 subunits; 3 respiratory subunits, 2 core proteins and 5 low-molecular weight proteins.

Its subcellular location is the mitochondrion inner membrane. This is a component of the ubiquinol-cytochrome c reductase complex (complex III or cytochrome b-c1 complex), which is part of the mitochondrial respiratory chain. The polypeptide is Ubiquinol-cytochrome-C reductase complex subunit IX, mitochondrial (Euglena gracilis).